Consider the following 1905-residue polypeptide: Transport and Golgi organization protein 1 homolog (1905 aa).

An N-terminal signal peptide occupies residues 1-22; that stretch reads MAAAQGLLFWLLLLGPPCRVPG. Over 23–1141 the chain is Lumenal; the sequence is QPEQDPGRRF…EPASVTPLEN (1119 aa). Positions 45–107 constitute an SH3 domain; it reads MLMYRGEALE…PKDLIQVVHE (63 aa). Over residues 154–167 the composition is skewed to basic and acidic residues; the sequence is SEKVKEKTAQRVEE. Disordered regions lie at residues 154–259 and 313–621; these read SEKV…HEQE and TVGK…IKDR. Asn173 is a glycosylation site (N-linked (GlcNAc...) asparagine). Residues 173–190 are compositionally biased toward acidic residues; it reads NESDAEPEPGEPNSEESE. Positions 198–208 are enriched in basic and acidic residues; that stretch reads AELRERSEAQK. The segment covering 209–220 has biased composition (polar residues); it reads SHPQVNSQTGHA. Phosphoserine occurs at positions 226 and 229. Over residues 234-245 the composition is skewed to basic and acidic residues; that stretch reads LQDKLKVPDSEN. N-linked (GlcNAc...) asparagine glycosylation is present at Asn246. Positions 246–255 are enriched in polar residues; it reads NKTSNSSQVS. A compositionally biased stretch (acidic residues) spans 317–327; it reads EEEENKEDFDE. Basic and acidic residues-rich tracts occupy residues 337–366 and 373–386; these read EDTK…KVEE and KKGD…REDT. A compositionally biased stretch (acidic residues) spans 392–414; it reads MEGEENTDTDLESSDSKEEDDPL. Composition is skewed to basic and acidic residues over residues 419 to 436 and 459 to 480; these read RLGK…KAAD and HMKD…HEVG. The stretch at 467-527 forms a coiled coil; it reads VEEPRRDWVQ…ANQENDLKGA (61 aa). A compositionally biased stretch (polar residues) spans 488-500; that stretch reads DQAVQGSSQSGHL. The segment covering 531-542 has biased composition (basic and acidic residues); the sequence is ISKEMLHEEKPS. N-linked (GlcNAc...) asparagine glycosylation occurs at Asn627. 3 disordered regions span residues 657–908, 1036–1059, and 1085–1118; these read QQGG…PHAP, APPA…QPPL, and PVTR…TPVD. Residues 669 to 714 are compositionally biased toward basic and acidic residues; that stretch reads VSEKRELPEEEVTRVTKDASDEGQEVRKTGQTDSIEGRGFRPKEPN. Positions 715–730 are enriched in acidic residues; that stretch reads PEDEDYSPEELLEDEN. Composition is skewed to basic and acidic residues over residues 736–751, 766–789, 842–859, and 868–884; these read QSKE…RLDV, TDPE…KNET, SQKK…EGHP, and PGVE…EKFV. The residue at position 873 (Ser873) is a Phosphoserine. Residues 1142-1162 lie within the membrane without spanning it; that stretch reads AIAFIYSLVFHLTKTLLATLP. Topologically, residues 1163–1173 are lumenal; that stretch reads DDVQPGPDFYG. The chain crosses the membrane as a helical span at residues 1174 to 1194; sequence LPWKPVLITASLGIVSFAVFF. The Cytoplasmic portion of the chain corresponds to 1195 to 1905; it reads WRTVLAVKSR…DCSPALKQSP (711 aa). Residues 1208 to 1647 form a mediates interaction with MIA2 region; that stretch reads VTEQQISEKL…VIVKPMPGRP (440 aa). Residues 1211 to 1393 adopt a coiled-coil conformation; the sequence is QQISEKLKNI…SQKDLEVALT (183 aa). Residues 1416-1443 form a disordered region; it reads SESEDQNKGGSESDELANGEVGGDRSEK. Ser1428 is subject to Phosphoserine. A coiled-coil region spans residues 1484–1636; that stretch reads NLEDQIKKLE…TQKMAMMQEE (153 aa). Residues 1639-1905 are disordered; sequence IVKPMPGRPN…DCSPALKQSP (267 aa). Residues 1647-1664 are compositionally biased toward polar residues; the sequence is PNTQNPPRRGPLSQNGSF. Phosphoserine occurs at positions 1663, 1675, 1703, 1724, 1738, and 1742. A proline-rich domain (PRD); mediates interaction with the COPII coat subunits SEC23A and SEC23B region spans residues 1748–1905; the sequence is DEGKVSMAAK…DCSPALKQSP (158 aa). Residues 1776 to 1806 are compositionally biased toward pro residues; sequence LLPPIRYGPPPQLCGPFGPRPLPPPFGPGMR. Residue Arg1781 is modified to Asymmetric dimethylarginine. The interval 1785–1845 is SEC16A-interacting region (SIR); required for its localization to endoplasmic reticulum exit sites and for its interaction with SEC16A; it reads PPQLCGPFGP…GHAPFRPLGS (61 aa). Positions 1821 to 1831 are enriched in basic and acidic residues; it reads GKRDLPLDPRE. Ser1890 and Ser1904 each carry phosphoserine. A compositionally biased stretch (polar residues) spans 1891-1905; the sequence is QGASQDCSPALKQSP.

This sequence belongs to the MIA/OTOR family. Tango1 subfamily. In terms of assembly, interacts with MIA2. Interacts (via SH3 domain) with COL7A1. Interacts with the COPII coat subunits SEC23A, SEC23B and maybe SEC24C. May interact with APOB and MIA2. Interacts with SEC16A.

It is found in the endoplasmic reticulum membrane. In terms of biological role, plays a role in the transport of cargos that are too large to fit into COPII-coated vesicles and require specific mechanisms to be incorporated into membrane-bound carriers and exported from the endoplasmic reticulum. This protein is required for collagen VII (COL7A1) secretion by loading COL7A1 into transport carriers. It may participate in cargo loading of COL7A1 at endoplasmic reticulum exit sites by binding to COPII coat subunits Sec23/24 and guiding SH3-bound COL7A1 into a growing carrier. Does not play a role in global protein secretion and is apparently specific to COL7A1 cargo loading. However, it may participate in secretion of other proteins in cells that do not secrete COL7A1. It is also specifically required for the secretion of lipoproteins by participating in their export from the endoplasmic reticulum. Required for correct assembly of COPII coat components at endoplasmic reticulum exit sites (ERES) and for the localization of SEC16A and membrane-bound ER-resident complexes consisting of MIA2 and PREB/SEC12 to ERES. The polypeptide is Transport and Golgi organization protein 1 homolog (Bos taurus (Bovine)).